We begin with the raw amino-acid sequence, 420 residues long: Tryptophan synthase beta chain (420 aa).

Lys-99 bears the N6-(pyridoxal phosphate)lysine mark.

Belongs to the TrpB family. As to quaternary structure, tetramer of two alpha and two beta chains. Requires pyridoxal 5'-phosphate as cofactor.

It catalyses the reaction (1S,2R)-1-C-(indol-3-yl)glycerol 3-phosphate + L-serine = D-glyceraldehyde 3-phosphate + L-tryptophan + H2O. It participates in amino-acid biosynthesis; L-tryptophan biosynthesis; L-tryptophan from chorismate: step 5/5. Its function is as follows. The beta subunit is responsible for the synthesis of L-tryptophan from indole and L-serine. This chain is Tryptophan synthase beta chain, found in Helicobacter hepaticus (strain ATCC 51449 / 3B1).